Consider the following 717-residue polypeptide: DNA ligase (717 aa).

Residues 44–48 (DADYD), 93–94 (SL), and glutamate 127 each bind NAD(+). Lysine 129 acts as the N6-AMP-lysine intermediate in catalysis. The NAD(+) site is built by arginine 150, glutamate 186, lysine 302, and lysine 326. Zn(2+)-binding residues include cysteine 431, cysteine 434, cysteine 455, and cysteine 461. A BRCT domain is found at 639–717 (ATDSPVAGKT…EDEWLALIGG (79 aa)).

Belongs to the NAD-dependent DNA ligase family. LigA subfamily. The cofactor is Mg(2+). Mn(2+) is required as a cofactor.

It catalyses the reaction NAD(+) + (deoxyribonucleotide)n-3'-hydroxyl + 5'-phospho-(deoxyribonucleotide)m = (deoxyribonucleotide)n+m + AMP + beta-nicotinamide D-nucleotide.. DNA ligase that catalyzes the formation of phosphodiester linkages between 5'-phosphoryl and 3'-hydroxyl groups in double-stranded DNA using NAD as a coenzyme and as the energy source for the reaction. It is essential for DNA replication and repair of damaged DNA. In Sinorhizobium medicae (strain WSM419) (Ensifer medicae), this protein is DNA ligase.